A 610-amino-acid polypeptide reads, in one-letter code: Elongation factor 4 (610 aa).

The tr-type G domain maps to serine 13 to lysine 195. Residues aspartate 25–threonine 30 and asparagine 142–aspartate 145 each bind GTP.

Belongs to the TRAFAC class translation factor GTPase superfamily. Classic translation factor GTPase family. LepA subfamily.

It localises to the cell inner membrane. It catalyses the reaction GTP + H2O = GDP + phosphate + H(+). In terms of biological role, required for accurate and efficient protein synthesis under certain stress conditions. May act as a fidelity factor of the translation reaction, by catalyzing a one-codon backward translocation of tRNAs on improperly translocated ribosomes. Back-translocation proceeds from a post-translocation (POST) complex to a pre-translocation (PRE) complex, thus giving elongation factor G a second chance to translocate the tRNAs correctly. Binds to ribosomes in a GTP-dependent manner. This chain is Elongation factor 4, found in Rhizobium etli (strain CIAT 652).